A 348-amino-acid chain; its full sequence is Protein RecA (348 aa).

67–74 is a binding site for ATP; it reads GPESSGKT.

This sequence belongs to the RecA family.

The protein localises to the cytoplasm. Functionally, can catalyze the hydrolysis of ATP in the presence of single-stranded DNA, the ATP-dependent uptake of single-stranded DNA by duplex DNA, and the ATP-dependent hybridization of homologous single-stranded DNAs. It interacts with LexA causing its activation and leading to its autocatalytic cleavage. The protein is Protein RecA of Cutibacterium acnes (Propionibacterium acnes).